A 387-amino-acid polypeptide reads, in one-letter code: ATP phosphoribosyltransferase regulatory subunit (387 aa).

This sequence belongs to the class-II aminoacyl-tRNA synthetase family. HisZ subfamily. As to quaternary structure, heteromultimer composed of HisG and HisZ subunits.

The protein resides in the cytoplasm. It participates in amino-acid biosynthesis; L-histidine biosynthesis; L-histidine from 5-phospho-alpha-D-ribose 1-diphosphate: step 1/9. Its function is as follows. Required for the first step of histidine biosynthesis. May allow the feedback regulation of ATP phosphoribosyltransferase activity by histidine. This Psychrobacter cryohalolentis (strain ATCC BAA-1226 / DSM 17306 / VKM B-2378 / K5) protein is ATP phosphoribosyltransferase regulatory subunit.